The primary structure comprises 103 residues: Integration host factor subunit beta (103 aa).

The protein belongs to the bacterial histone-like protein family. Heterodimer of an alpha and a beta chain.

Functionally, this protein is one of the two subunits of integration host factor, a specific DNA-binding protein that functions in genetic recombination as well as in transcriptional and translational control. The chain is Integration host factor subunit beta from Sinorhizobium medicae (strain WSM419) (Ensifer medicae).